The sequence spans 363 residues: Large ribosomal subunit protein uL4 (363 aa).

The protein belongs to the universal ribosomal protein uL4 family. As to quaternary structure, component of the large ribosomal subunit. Mature ribosomes consist of a small (40S) and a large (60S) subunit. The 40S subunit contains about 32 different proteins and 1 molecule of RNA (18S). The 60S subunit contains 45 different proteins and 3 molecules of RNA (25S, 5.8S and 5S).

The protein resides in the cytoplasm. Functionally, component of the ribosome, a large ribonucleoprotein complex responsible for the synthesis of proteins in the cell. The small ribosomal subunit (SSU) binds messenger RNAs (mRNAs) and translates the encoded message by selecting cognate aminoacyl-transfer RNA (tRNA) molecules. The large subunit (LSU) contains the ribosomal catalytic site termed the peptidyl transferase center (PTC), which catalyzes the formation of peptide bonds, thereby polymerizing the amino acids delivered by tRNAs into a polypeptide chain. The nascent polypeptides leave the ribosome through a tunnel in the LSU and interact with protein factors that function in enzymatic processing, targeting, and the membrane insertion of nascent chains at the exit of the ribosomal tunnel. In Candida albicans (strain SC5314 / ATCC MYA-2876) (Yeast), this protein is Large ribosomal subunit protein uL4.